Here is a 262-residue protein sequence, read N- to C-terminus: Ribosome maturation factor RimP (262 aa).

The tract at residues 197–262 (RELGVLPPPP…LGQTDPTEGD (66 aa)) is disordered. Positions 223–233 (KLPKAKLKAAK) are enriched in basic residues. Residues 240–254 (TKEHRLAAAERKRLG) are compositionally biased toward basic and acidic residues.

This sequence belongs to the RimP family.

Its subcellular location is the cytoplasm. Its function is as follows. Required for maturation of 30S ribosomal subunits. The sequence is that of Ribosome maturation factor RimP from Rhodopseudomonas palustris (strain BisB18).